Here is a 745-residue protein sequence, read N- to C-terminus: Copper-exporting P-type ATPase B (745 aa).

Positions 1-76 (MNNGIDPENE…GMDHSHMDHE (76 aa)) are disordered. Over 1–108 (MNNGIDPENE…HMGNFKQKFW (108 aa)) the chain is Cytoplasmic. Basic and acidic residues predominate over residues 36-76 (LQEHGKMENMDQHHTHGHMERHQQMDHGHMSGMDHSHMDHE). Repeat copies occupy residues 60–71 (MDHGHMSGMDHS), 73–84 (MDHEDMSGMNHS), and 86–97 (MGHENMSGMDHS). Residues 60-97 (MDHGHMSGMDHSHMDHEDMSGMNHSHMGHENMSGMDHS) are 3 X 12 AA approximate repeats. Residues 109–128 (LSLILAIPIILFSPMMGMSF) traverse the membrane as a helical segment. Over 129–139 (PFQVTFPGSNW) the chain is Extracellular. A helical membrane pass occupies residues 140 to 160 (VVLVLATILFIYGGQPFLSGA). At 161-170 (KMELKQKSPA) the chain is on the cytoplasmic side. Residues 171–191 (MMTLIAMGITVAYVYSVYSFI) traverse the membrane as a helical segment. Topologically, residues 192-200 (ANLINPHTH) are extracellular. A helical transmembrane segment spans residues 201-217 (VMDFFWELATLIVIMLL). Residues 218 to 359 (GHWIEMNAVS…EFLSDKVAKW (142 aa)) lie on the Cytoplasmic side of the membrane. The helical transmembrane segment at 360–379 (LFYVALVVGIIAFIAWLFLA) threads the bilayer. The Extracellular segment spans residues 380-388 (NLPDALERM). The chain crosses the membrane as a helical span at residues 389–409 (VTVFIIACPHALGLAIPLVVA). Over 410–703 (RSTSIAAKNG…QNLWWGAGYN (294 aa)) the chain is Cytoplasmic. Catalysis depends on aspartate 440, which acts as the 4-aspartylphosphate intermediate. Aspartate 638 and aspartate 642 together coordinate Mg(2+). A helical transmembrane segment spans residues 704–721 (IIAIPLAAGILAPIGLIL). The Extracellular portion of the chain corresponds to 722–723 (SP). The chain crosses the membrane as a helical span at residues 724-744 (AVGAVLMSLSTVVVALNALTL). Residue lysine 745 is a topological domain, cytoplasmic.

It belongs to the cation transport ATPase (P-type) (TC 3.A.3) family. Type IB subfamily. As to quaternary structure, monomer.

The protein resides in the cell membrane. It catalyses the reaction Cu(+)(in) + ATP + H2O = Cu(+)(out) + ADP + phosphate + H(+). With respect to regulation, inhibited by vanadate. Its function is as follows. Involved in copper export. Can also export silver. This is Copper-exporting P-type ATPase B (copB) from Enterococcus hirae (strain ATCC 9790 / DSM 20160 / JCM 8729 / LMG 6399 / NBRC 3181 / NCIMB 6459 / NCDO 1258 / NCTC 12367 / WDCM 00089 / R).